We begin with the raw amino-acid sequence, 259 residues long: Acyl-[acyl-carrier-protein]--UDP-N-acetylglucosamine O-acyltransferase (259 aa).

This sequence belongs to the transferase hexapeptide repeat family. LpxA subfamily. In terms of assembly, homotrimer.

It is found in the cytoplasm. It catalyses the reaction a (3R)-hydroxyacyl-[ACP] + UDP-N-acetyl-alpha-D-glucosamine = a UDP-3-O-[(3R)-3-hydroxyacyl]-N-acetyl-alpha-D-glucosamine + holo-[ACP]. The protein operates within glycolipid biosynthesis; lipid IV(A) biosynthesis; lipid IV(A) from (3R)-3-hydroxytetradecanoyl-[acyl-carrier-protein] and UDP-N-acetyl-alpha-D-glucosamine: step 1/6. Functionally, involved in the biosynthesis of lipid A, a phosphorylated glycolipid that anchors the lipopolysaccharide to the outer membrane of the cell. This Nautilia profundicola (strain ATCC BAA-1463 / DSM 18972 / AmH) protein is Acyl-[acyl-carrier-protein]--UDP-N-acetylglucosamine O-acyltransferase.